The primary structure comprises 481 residues: Glutamyl-tRNA(Gln) amidotransferase subunit A (481 aa).

Catalysis depends on charge relay system residues Lys-76 and Ser-151. The Acyl-ester intermediate role is filled by Ser-175.

The protein belongs to the amidase family. GatA subfamily. In terms of assembly, heterotrimer of A, B and C subunits.

It catalyses the reaction L-glutamyl-tRNA(Gln) + L-glutamine + ATP + H2O = L-glutaminyl-tRNA(Gln) + L-glutamate + ADP + phosphate + H(+). Allows the formation of correctly charged Gln-tRNA(Gln) through the transamidation of misacylated Glu-tRNA(Gln) in organisms which lack glutaminyl-tRNA synthetase. The reaction takes place in the presence of glutamine and ATP through an activated gamma-phospho-Glu-tRNA(Gln). In Neisseria meningitidis serogroup C (strain 053442), this protein is Glutamyl-tRNA(Gln) amidotransferase subunit A.